The sequence spans 498 residues: ATP synthase subunit beta, chloroplastic (498 aa).

172-179 serves as a coordination point for ATP; it reads GGAGVGKT.

Belongs to the ATPase alpha/beta chains family. In terms of assembly, F-type ATPases have 2 components, CF(1) - the catalytic core - and CF(0) - the membrane proton channel. CF(1) has five subunits: alpha(3), beta(3), gamma(1), delta(1), epsilon(1). CF(0) has four main subunits: a(1), b(1), b'(1) and c(9-12).

It localises to the plastid. The protein localises to the chloroplast thylakoid membrane. The catalysed reaction is ATP + H2O + 4 H(+)(in) = ADP + phosphate + 5 H(+)(out). In terms of biological role, produces ATP from ADP in the presence of a proton gradient across the membrane. The catalytic sites are hosted primarily by the beta subunits. This Agapanthus africanus (Lily of the Nile) protein is ATP synthase subunit beta, chloroplastic.